A 72-amino-acid polypeptide reads, in one-letter code: Omega-conotoxin-like SVIA mutant 1 (72 aa).

The N-terminal stretch at 1–22 (MKLTCVVIVAVLLLTACQLITA) is a signal peptide. A propeptide spanning residues 23-48 (EDSRGAQKHRTLRSTARRSKSELTTR) is cleaved from the precursor. Cystine bridges form between Cys-49-Cys-63, Cys-56-Cys-66, and Cys-62-Cys-71. Pro-55 carries the post-translational modification 4-hydroxyproline.

Belongs to the conotoxin O1 superfamily. As to expression, expressed by the venom duct.

The protein resides in the secreted. Its function is as follows. Omega-conotoxins act at presynaptic membranes, they bind and block voltage-gated calcium channels (Cav). The chain is Omega-conotoxin-like SVIA mutant 1 from Conus striatus (Striated cone).